A 215-amino-acid polypeptide reads, in one-letter code: Imidazole glycerol phosphate synthase subunit HisH (215 aa).

One can recognise a Glutamine amidotransferase type-1 domain in the interval 7-215; that stretch reads TIAVIDYGMG…LLKNFVEWQP (209 aa). Cysteine 86 acts as the Nucleophile in catalysis. Residues histidine 195 and glutamate 197 contribute to the active site.

In terms of assembly, heterodimer of HisH and HisF.

It is found in the cytoplasm. The enzyme catalyses 5-[(5-phospho-1-deoxy-D-ribulos-1-ylimino)methylamino]-1-(5-phospho-beta-D-ribosyl)imidazole-4-carboxamide + L-glutamine = D-erythro-1-(imidazol-4-yl)glycerol 3-phosphate + 5-amino-1-(5-phospho-beta-D-ribosyl)imidazole-4-carboxamide + L-glutamate + H(+). It carries out the reaction L-glutamine + H2O = L-glutamate + NH4(+). Its pathway is amino-acid biosynthesis; L-histidine biosynthesis; L-histidine from 5-phospho-alpha-D-ribose 1-diphosphate: step 5/9. IGPS catalyzes the conversion of PRFAR and glutamine to IGP, AICAR and glutamate. The HisH subunit catalyzes the hydrolysis of glutamine to glutamate and ammonia as part of the synthesis of IGP and AICAR. The resulting ammonia molecule is channeled to the active site of HisF. This chain is Imidazole glycerol phosphate synthase subunit HisH, found in Dechloromonas aromatica (strain RCB).